The chain runs to 511 residues: MFTLGTALSNQIDANWQTYVMIIVYFIILLIIGFYGYRQATGNLSEFMLGGRSIGPYITALSAGASDMSGWMIMGLPGSVYSTGLSAIWITIGLTLGAYINYFVVAPRLRVFTEIAGDAITLPDFFKNRLDDKKNIIKIISGLIIVVFFTLYTHSGFVSGGKLFESAFGLNYHAGLLIVAIIVIFYTFFGGYLAVSITDFFQGVIMLIAMVMVPIVALLKLNGWDTFHDIAQMKPTNLDLFRGTTVLGIVSLFSWGLGYFGQPHIIVRFMSIKSHKLLPKARRLGISWMAVGLLGAIGVGLTGISFISERHIKSEDPETLFIVMSQILFHPLVGGFLLAAILAAIMSTISSQLLVTSSSLTEDFYKLIRGSDKASSHQKEFVLIGRLSVLLVAIVAITIAWHPNDTILNLVGNAWAGFGAAFSPLVLYSLYWKDLTRAGAISGMVAGAVVVIVWISWIKPLATINAFFGMYEIIPGFIISVLITYIVSKLTKKPDDYVIENLNKVKHIVKE.

A run of 13 helical transmembrane segments spans residues 16-36 (WQTY…GFYG), 54-74 (IGPY…WMIM), 85-105 (LSAI…YFVV), 139-159 (IISG…GFVS), 175-195 (GLLI…YLAV), 199-219 (DFFQ…VALL), 246-266 (VLGI…PHII), 284-304 (LGIS…LTGI), 327-347 (ILFH…AIMS), 381-401 (FVLI…TIAW), 407-427 (ILNL…PLVL), 438-458 (AGAI…ISWI), and 467-487 (FFGM…TYIV).

It belongs to the sodium:solute symporter (SSF) (TC 2.A.21) family.

Its subcellular location is the cell membrane. The catalysed reaction is L-proline(in) + Na(+)(in) = L-proline(out) + Na(+)(out). Its function is as follows. Catalyzes the sodium-dependent uptake of extracellular L-proline. This is Sodium/proline symporter (putP) from Staphylococcus epidermidis (strain ATCC 12228 / FDA PCI 1200).